A 211-amino-acid polypeptide reads, in one-letter code: Methylthioribulose-1-phosphate dehydratase (211 aa).

Positions 94 and 96 each coordinate Zn(2+).

It belongs to the aldolase class II family. MtnB subfamily. Requires Zn(2+) as cofactor.

It catalyses the reaction 5-(methylsulfanyl)-D-ribulose 1-phosphate = 5-methylsulfanyl-2,3-dioxopentyl phosphate + H2O. It participates in amino-acid biosynthesis; L-methionine biosynthesis via salvage pathway; L-methionine from S-methyl-5-thio-alpha-D-ribose 1-phosphate: step 2/6. Catalyzes the dehydration of methylthioribulose-1-phosphate (MTRu-1-P) into 2,3-diketo-5-methylthiopentyl-1-phosphate (DK-MTP-1-P). This Pseudoalteromonas translucida (strain TAC 125) protein is Methylthioribulose-1-phosphate dehydratase.